The primary structure comprises 114 residues: Transmembrane protein 14B (114 aa).

4 helical membrane passes run 8-28 (LVPLHWFGFGYTALVVSGGIV), 34-54 (GSVPSLAAGLLFGSLAGLGAY), 60-80 (PRNVWGFLAATSVTFVGVMGM), and 83-103 (YYYGKFMPVGLIAGASLLMAA).

It belongs to the TMEM14 family. In terms of assembly, interacts with IQGAP1; this interaction promotes phosphorylation and nuclear translocation of IQGAP1. In terms of tissue distribution, mainly expressed in the outer subventricular zone (OSVZ) of the fetal brains.

It is found in the membrane. Functionally, primate-specific protein involved in cortical expansion and folding in the developing neocortex. May drive neural progenitor proliferation through nuclear translocation of IQGAP1, which in turn promotes G1/S cell cycle transitions. The sequence is that of Transmembrane protein 14B (TMEM14B) from Homo sapiens (Human).